A 104-amino-acid polypeptide reads, in one-letter code: Colipase-like protein 2 (104 aa).

Residues 1–19 (MAFTQALVTVLAFLVGTLP) form the signal peptide. 5 disulfides stabilise this stretch: C38–C49, C44–C60, C48–C82, C70–C90, and C84–C101.

Belongs to the colipase family.

Its subcellular location is the secreted. The chain is Colipase-like protein 2 (Clpsl2) from Rattus norvegicus (Rat).